A 241-amino-acid polypeptide reads, in one-letter code: Phosphoribosylaminoimidazole-succinocarboxamide synthase (241 aa).

The protein belongs to the SAICAR synthetase family.

The catalysed reaction is 5-amino-1-(5-phospho-D-ribosyl)imidazole-4-carboxylate + L-aspartate + ATP = (2S)-2-[5-amino-1-(5-phospho-beta-D-ribosyl)imidazole-4-carboxamido]succinate + ADP + phosphate + 2 H(+). It participates in purine metabolism; IMP biosynthesis via de novo pathway; 5-amino-1-(5-phospho-D-ribosyl)imidazole-4-carboxamide from 5-amino-1-(5-phospho-D-ribosyl)imidazole-4-carboxylate: step 1/2. The polypeptide is Phosphoribosylaminoimidazole-succinocarboxamide synthase (Methanoculleus marisnigri (strain ATCC 35101 / DSM 1498 / JR1)).